The chain runs to 504 residues: Cytochrome P450 monooxygenase iccC (504 aa).

Residues 7 to 26 (LPWILLYTGFLAIFLSRLFS) traverse the membrane as a helical segment. N-linked (GlcNAc...) asparagine glycans are attached at residues asparagine 134, asparagine 312, asparagine 365, and asparagine 374. Position 452 (cysteine 452) interacts with heme. Residue asparagine 494 is glycosylated (N-linked (GlcNAc...) asparagine).

The protein belongs to the cytochrome P450 family. The cofactor is heme.

The protein localises to the membrane. The enzyme catalyses (3E,5S)-3-[(2E,4E,8S,10E,12Z)-1-hydroxy-4,8-dimethyltetradeca-2,4,10,12-tetraen-1-ylidene]-5-[(4-hydroxyphenyl)methyl]pyrrolidine-2,4-dione + reduced [NADPH--hemoprotein reductase] + O2 = 3-[(2E,4E,8S,10E,12Z)-4,8-dimethyltetradeca-2,4,10,12-tetraenoyl]-4-hydroxy-5-(4-hydroxyphenyl)-1,2-dihydropyridin-2-one + oxidized [NADPH--hemoprotein reductase] + 2 H2O. It functions in the pathway mycotoxin biosynthesis. Functionally, cytochrome P450 monooxygenase; part of the gene cluster that mediates the biosynthesis of ilicicolin H, a 4-hydroxy-2-pyridonealkaloid that has potent and broad antifungal activities by inhibiting the mitochondrial respiration chain. IccC catalyzes the ring expansion of the tetramate intermediate to the acyclic 2-pyridone intermediate that contains the trans bis-diene chain. The biosynthesis of ilicicolin H starts with formation of the tetramic acid by the hybrid PKS-NRPS synthetase iccA with the partnering trans-enoyl reductase iccB since iccA lacks a designated enoylreductase (ER) domain. The cytochrome P450 monooxygenase iccC then catalyzes the ring expansion of the tetramate to the acyclic 2-pyridone. The pericyclase iccD further converts the acyclic 2-pyridone into 8-epi-ilicicolin H. Finally, the epimerase iccE converts 8-epi-ilicicolin H into ilicicolin H via epimerization. IccA to iccE are sufficient for ilicicolin H biosynthesis and the roles of the remaining enzymes, iccF, iccG and iccH within the pathway have still to be determined. This chain is Cytochrome P450 monooxygenase iccC, found in Talaromyces variabilis (Penicillium variabile).